The sequence spans 178 residues: Protein GrpE (178 aa).

The protein belongs to the GrpE family. In terms of assembly, homodimer.

It localises to the cytoplasm. Functionally, participates actively in the response to hyperosmotic and heat shock by preventing the aggregation of stress-denatured proteins, in association with DnaK and GrpE. It is the nucleotide exchange factor for DnaK and may function as a thermosensor. Unfolded proteins bind initially to DnaJ; upon interaction with the DnaJ-bound protein, DnaK hydrolyzes its bound ATP, resulting in the formation of a stable complex. GrpE releases ADP from DnaK; ATP binding to DnaK triggers the release of the substrate protein, thus completing the reaction cycle. Several rounds of ATP-dependent interactions between DnaJ, DnaK and GrpE are required for fully efficient folding. The protein is Protein GrpE of Rickettsia typhi (strain ATCC VR-144 / Wilmington).